We begin with the raw amino-acid sequence, 1106 residues long: Protein shuttle craft (1106 aa).

Disordered stretches follow at residues 7–26 (QLTN…AMAD) and 189–371 (PAAA…KLSQ). A compositionally biased stretch (low complexity) spans 189 to 201 (PAAATTNGNSTAS). Basic and acidic residues-rich tracts occupy residues 232–270 (NYER…RDSR) and 278–323 (RRSD…RDRI). The residue at position 335 (Thr-335) is a Phosphothreonine. Ser-336, Ser-339, Ser-343, and Ser-354 each carry phosphoserine. A compositionally biased stretch (polar residues) spans 336–354 (SNESAHPSPEKQSQLQQIS). An RING-type; atypical zinc finger spans residues 386–433 (CLVCVEAIKSHQPTWSCRNCYHMLHLKCTITWASSSKSEVGWRCPACQ). 8 consecutive NF-X1-type zinc fingers follow at residues 474-492 (CSHA…PCQA), 527-546 (CGEH…ACSE), 585-604 (CGHH…PCKL), 644-667 (CGKP…PCPK), 706-725 (CGKH…DCPL), 733-752 (CGKH…PCYR), 844-867 (CGGH…ICRQ), and 876-896 (CGHK…PCKE). Residues 1006–1071 (TKSVYETLTD…NRNVVATAHK (66 aa)) enclose the R3H domain.

It belongs to the NFX1 family. As to expression, ovaries and embryonic central nervous system.

It is found in the nucleus. Functionally, plays an essential role during the late stages of embryonic neurogenesis. May either fine-tune the guidance or the spatial maintenance of the migrating SNB and in nerve roots, which are composed of axons originating from distinct groups of motor neurons and may be required to either guide or maintain the position of these nerves along a direct and straight path to their ultimate targets in particular muscle fields. May play a role in egg chamber development and/or may confer essential maternal contributions to the early embryo. The chain is Protein shuttle craft (stc) from Drosophila melanogaster (Fruit fly).